Here is a 280-residue protein sequence, read N- to C-terminus: UDP-3-O-acyl-N-acetylglucosamine deacetylase (280 aa).

Residues His77, His238, and Asp242 each contribute to the Zn(2+) site. His265 acts as the Proton donor in catalysis.

This sequence belongs to the LpxC family. It depends on Zn(2+) as a cofactor.

The enzyme catalyses a UDP-3-O-[(3R)-3-hydroxyacyl]-N-acetyl-alpha-D-glucosamine + H2O = a UDP-3-O-[(3R)-3-hydroxyacyl]-alpha-D-glucosamine + acetate. It functions in the pathway glycolipid biosynthesis; lipid IV(A) biosynthesis; lipid IV(A) from (3R)-3-hydroxytetradecanoyl-[acyl-carrier-protein] and UDP-N-acetyl-alpha-D-glucosamine: step 2/6. Catalyzes the hydrolysis of UDP-3-O-myristoyl-N-acetylglucosamine to form UDP-3-O-myristoylglucosamine and acetate, the committed step in lipid A biosynthesis. This chain is UDP-3-O-acyl-N-acetylglucosamine deacetylase, found in Trichormus variabilis (strain ATCC 29413 / PCC 7937) (Anabaena variabilis).